The following is a 162-amino-acid chain: SsrA-binding protein (162 aa).

The protein belongs to the SmpB family.

The protein resides in the cytoplasm. In terms of biological role, required for rescue of stalled ribosomes mediated by trans-translation. Binds to transfer-messenger RNA (tmRNA), required for stable association of tmRNA with ribosomes. tmRNA and SmpB together mimic tRNA shape, replacing the anticodon stem-loop with SmpB. tmRNA is encoded by the ssrA gene; the 2 termini fold to resemble tRNA(Ala) and it encodes a 'tag peptide', a short internal open reading frame. During trans-translation Ala-aminoacylated tmRNA acts like a tRNA, entering the A-site of stalled ribosomes, displacing the stalled mRNA. The ribosome then switches to translate the ORF on the tmRNA; the nascent peptide is terminated with the 'tag peptide' encoded by the tmRNA and targeted for degradation. The ribosome is freed to recommence translation, which seems to be the essential function of trans-translation. This is SsrA-binding protein from Sorangium cellulosum (strain So ce56) (Polyangium cellulosum (strain So ce56)).